Consider the following 1053-residue polypeptide: Carbamoyl phosphate synthase large chain (1053 aa).

The carboxyphosphate synthetic domain stretch occupies residues 1–397 (MPKRTDIKKV…SFMKAKRSID (397 aa)). 12 residues coordinate ATP: Arg-127, Arg-167, Gly-173, Gly-174, Glu-206, Val-208, Glu-213, Gly-239, Ile-240, His-241, Gln-282, and Glu-294. Positions 131-323 (RDLMNEIGEP…IARVAAKIAI (193 aa)) constitute an ATP-grasp 1 domain. The Mg(2+) site is built by Gln-282, Glu-294, and Asn-296. Residues Gln-282, Glu-294, and Asn-296 each contribute to the Mn(2+) site. The segment at 398–530 (TDVRTHTSPS…YSTREGTSEI (133 aa)) is oligomerization domain. The tract at residues 531-919 (VRDKKQKILI…YKACISADNE (389 aa)) is carbamoyl phosphate synthetic domain. The ATP-grasp 2 domain maps to 661-852 (SVLLTTLQIP…IAKIAAKVMI (192 aa)). The ATP site is built by Arg-697, Ser-736, Leu-738, Glu-743, Gly-768, Ile-769, His-770, Ser-771, Gln-811, and Glu-823. Mg(2+)-binding residues include Gln-811, Glu-823, and Asn-825. Mn(2+) contacts are provided by Gln-811, Glu-823, and Asn-825. The 136-residue stretch at 918–1053 (NELPLKGNVF…TLEPLSHYLR (136 aa)) folds into the MGS-like domain. Residues 920–1053 (LPLKGNVFVS…TLEPLSHYLR (134 aa)) form an allosteric domain region.

Belongs to the CarB family. As to quaternary structure, composed of two chains; the small (or glutamine) chain promotes the hydrolysis of glutamine to ammonia, which is used by the large (or ammonia) chain to synthesize carbamoyl phosphate. Tetramer of heterodimers (alpha,beta)4. The cofactor is Mg(2+). It depends on Mn(2+) as a cofactor.

It catalyses the reaction hydrogencarbonate + L-glutamine + 2 ATP + H2O = carbamoyl phosphate + L-glutamate + 2 ADP + phosphate + 2 H(+). The catalysed reaction is hydrogencarbonate + NH4(+) + 2 ATP = carbamoyl phosphate + 2 ADP + phosphate + 2 H(+). Its pathway is amino-acid biosynthesis; L-arginine biosynthesis; carbamoyl phosphate from bicarbonate: step 1/1. The protein operates within pyrimidine metabolism; UMP biosynthesis via de novo pathway; (S)-dihydroorotate from bicarbonate: step 1/3. Functionally, large subunit of the glutamine-dependent carbamoyl phosphate synthetase (CPSase). CPSase catalyzes the formation of carbamoyl phosphate from the ammonia moiety of glutamine, carbonate, and phosphate donated by ATP, constituting the first step of 2 biosynthetic pathways, one leading to arginine and/or urea and the other to pyrimidine nucleotides. The large subunit (synthetase) binds the substrates ammonia (free or transferred from glutamine from the small subunit), hydrogencarbonate and ATP and carries out an ATP-coupled ligase reaction, activating hydrogencarbonate by forming carboxy phosphate which reacts with ammonia to form carbamoyl phosphate. The sequence is that of Carbamoyl phosphate synthase large chain from Methanoregula boonei (strain DSM 21154 / JCM 14090 / 6A8).